A 148-amino-acid polypeptide reads, in one-letter code: Transcriptional regulator MraZ (148 aa).

SpoVT-AbrB domains are found at residues 5–51 and 80–123; these read VATV…PLPE and AHDI…NEAR.

This sequence belongs to the MraZ family. As to quaternary structure, forms oligomers.

The protein resides in the cytoplasm. Its subcellular location is the nucleoid. This chain is Transcriptional regulator MraZ, found in Thiobacillus denitrificans (strain ATCC 25259 / T1).